We begin with the raw amino-acid sequence, 339 residues long: Dicamba O-demethylase, oxygenase component (339 aa).

The region spanning 8–110 (WYVAALPEEL…VVERDALIWI (103 aa)) is the Rieske domain. Positions 48, 50, 67, and 70 each coordinate [2Fe-2S] cluster. Fe cation is bound by residues His159 and His164. Positions 229, 250, and 284 each coordinate 3,6-dichloro-2-methoxybenzoate. Asp293 contacts Fe cation.

As to quaternary structure, homotrimer. The dicamba O-demethylase multicomponent enzyme system is composed of an oxygenase component (DdmC) and an electron transfer component formed by a ferredoxin reductase (DdmA) and a ferredoxin (DdmB). In vitro, dicamba O-demethylase assays in which DdmA2 is substituted for DdmA1 demonstrate that the two enzymes possess nearly identical activities. The cofactor is [2Fe-2S] cluster.

The catalysed reaction is 3,6-dichloro-2-methoxybenzoate + 2 reduced [2Fe-2S]-[ferredoxin] + O2 + 2 H(+) = 3,6-dichlorosalicylate + formaldehyde + 2 oxidized [2Fe-2S]-[ferredoxin] + H2O. With respect to regulation, activity enhanced by Fe(2+) and Mg(2+) ions. In terms of biological role, component of the dicamba O-demethylase multicomponent enzyme system involved in the degradation of the herbicide dicamba. In vitro, catalyzes the O-demethylation of 2-methoxy-3,6-dichlorobenzoic acid (dicamba) to yield 3,6-dichlorosalicylic acid (DCSA) via an exocyclic monooxygenation. This Stenotrophomonas maltophilia (Pseudomonas maltophilia) protein is Dicamba O-demethylase, oxygenase component.